A 198-amino-acid polypeptide reads, in one-letter code: T-cell surface glycoprotein CD3 epsilon chain (198 aa).

A signal peptide spans 1 to 21 (MQSGTRWRVLGLCLLSIGVWG). The Extracellular segment spans residues 22–117 (QDGNEEMGSI…RVCENCMEMD (96 aa)). One can recognise an Ig-like domain in the interval 37-107 (QVSISGTTVI…DASHHLYLKA (71 aa)). Residues Cys49 and Cys89 are joined by a disulfide bond. A helical membrane pass occupies residues 118–138 (VMAVATIVIVDICITLGLLLL). The Cytoplasmic portion of the chain corresponds to 139-198 (VYYWSKNRKAKAKPVTRGAGAGGRQRGQNKERPPPVPNPDYEPIRKGQQDLYSGLNQRRI). Positions 152 to 198 (PVTRGAGAGGRQRGQNKERPPPVPNPDYEPIRKGQQDLYSGLNQRRI) are disordered. The tract at residues 166–183 (QNKERPPPVPNPDYEPIR) is NUMB-binding region. Residues 169–196 (ERPPPVPNPDYEPIRKGQQDLYSGLNQR) enclose the ITAM domain. A proline-rich sequence region spans residues 170–177 (RPPPVPNP). Residues Tyr179 and Tyr190 each carry the phosphotyrosine modification. Residues 188 to 198 (DLYSGLNQRRI) show a composition bias toward polar residues.

The TCR-CD3 complex is composed of a CD3D/CD3E and a CD3G/CD3E heterodimers that preferentially associate with TCRalpha and TCRbeta, respectively, to form TCRalpha/CD3E/CD3G and TCRbeta/CD3G/CD3E trimers. In turn, the hexamer interacts with CD3Z homodimer to form the TCR-CD3 complex. Alternatively, TCRalpha and TCRbeta can be replaced by TCRgamma and TCRdelta. Interacts with CD6. Interacts (via Proline-rich sequence) with NCK1; the interaction is ligand dependent but independent of tyrosine kinase activation. Post-translationally, phosphorylated on Tyr residues after T-cell receptor triggering by LCK in association with CD4/CD8.

Its subcellular location is the cell membrane. Functionally, part of the TCR-CD3 complex present on T-lymphocyte cell surface that plays an essential role in adaptive immune response. When antigen presenting cells (APCs) activate T-cell receptor (TCR), TCR-mediated signals are transmitted across the cell membrane by the CD3 chains CD3D, CD3E, CD3G and CD3Z. All CD3 chains contain immunoreceptor tyrosine-based activation motifs (ITAMs) in their cytoplasmic domain. Upon TCR engagement, these motifs become phosphorylated by Src family protein tyrosine kinases LCK and FYN, resulting in the activation of downstream signaling pathways. In addition of this role of signal transduction in T-cell activation, CD3E plays an essential role in correct T-cell development. Also participates in internalization and cell surface down-regulation of TCR-CD3 complexes via endocytosis sequences present in CD3E cytosolic region. In addition to its role as a TCR coreceptor, it serves as a receptor for ITPRIPL1. Ligand recognition inhibits T-cell activation by promoting interaction with NCK1, which prevents CD3E-ZAP70 interaction and blocks the ERK-NFkB signaling cascade and calcium influx. This chain is T-cell surface glycoprotein CD3 epsilon chain (CD3E), found in Macaca fascicularis (Crab-eating macaque).